We begin with the raw amino-acid sequence, 152 residues long: Succinate dehydrogenase [ubiquinone] cytochrome b small subunit, mitochondrial (152 aa).

The N-terminal 21 residues, 1–21 (MATLLRVSSLCRANRASAFKS), are a transit peptide targeting the mitochondrion. The Mitochondrial matrix segment spans residues 22 to 56 (LLIRPVPCLTQDHHMVQTSQIHTSPNHHAGSKAAS). Residues 57–78 (MHWTSERALSVALLGLLPAAYL) form a helical membrane-spanning segment. The Mitochondrial intermembrane portion of the chain corresponds to 79–83 (YPGAA). A helical transmembrane segment spans residues 84-104 (MDYSLAAALTLHGHWGLGQVV). His95 provides a ligand contact to heme b. The Mitochondrial matrix portion of the chain corresponds to 105–113 (TDYVHGDAK). Tyr107 is an a ubiquinone binding site. Residues 114-135 (IKMANTSLFALSALTFAGLCYF) form a helical membrane-spanning segment. Residues 136 to 152 (NYHDVGICKAVSMLWSL) are Mitochondrial intermembrane-facing.

It belongs to the CybS family. Component of complex II composed of four subunits: the flavoprotein (FP) SDHA, iron-sulfur protein (IP) SDHB, and a cytochrome b560 composed of SDHC and SDHD.

The protein localises to the mitochondrion inner membrane. The protein operates within carbohydrate metabolism; tricarboxylic acid cycle. Membrane-anchoring subunit of succinate dehydrogenase (SDH) that is involved in complex II of the mitochondrial electron transport chain and is responsible for transferring electrons from succinate to ubiquinone (coenzyme Q). SDH also oxidizes malate to the non-canonical enol form of oxaloacetate, enol-oxaloacetate. Enol-oxaloacetate, which is a potent inhibitor of the succinate dehydrogenase activity, is further isomerized into keto-oxaloacetate. This is Succinate dehydrogenase [ubiquinone] cytochrome b small subunit, mitochondrial (sdhd) from Xenopus tropicalis (Western clawed frog).